Here is a 71-residue protein sequence, read N- to C-terminus: Ranatuerin-2PLa (71 aa).

Residues 1–22 (MFTTKKSMLLFFFLGTISLSLC) form the signal peptide. A propeptide spanning residues 23–41 (EQERGADEDDGVEMTEEEV) is cleaved from the precursor. Cysteines 66 and 71 form a disulfide.

Expressed by the skin glands.

It localises to the secreted. Its function is as follows. May have antimicrobial activity against the Gram-negative bacterium E.coli. This chain is Ranatuerin-2PLa, found in Lithobates palustris (Pickerel frog).